Consider the following 221-residue polypeptide: Small ribosomal subunit protein uS3 (221 aa).

In terms of domain architecture, KH type-2 spans 39–107 (LRKFLKDKLK…EVFLSIQEVR (69 aa)).

This sequence belongs to the universal ribosomal protein uS3 family. In terms of assembly, part of the 30S ribosomal subunit. Forms a tight complex with proteins S10 and S14.

Its function is as follows. Binds the lower part of the 30S subunit head. Binds mRNA in the 70S ribosome, positioning it for translation. In Bdellovibrio bacteriovorus (strain ATCC 15356 / DSM 50701 / NCIMB 9529 / HD100), this protein is Small ribosomal subunit protein uS3.